The sequence spans 794 residues: DNA ligase (794 aa).

Residues 1–47 are disordered; that stretch reads MEEDLFSLAAGKQPSQQATNETAPRAGEARENAGTDHPGNAEDPAHR. Residues 13-22 show a composition bias toward polar residues; the sequence is QPSQQATNET. Over residues 27–47 the composition is skewed to basic and acidic residues; the sequence is GEARENAGTDHPGNAEDPAHR. NAD(+)-binding positions include 73–77, 122–123, and E160; these read DAEYD and SI. Catalysis depends on K162, which acts as the N6-AMP-lysine intermediate. 4 residues coordinate NAD(+): R183, E219, K335, and K359. Zn(2+)-binding residues include C457, C460, C475, and C480. The region spanning 717 to 794 is the BRCT domain; the sequence is IPAGSLSGKT…EEDFYKMIGN (78 aa).

This sequence belongs to the NAD-dependent DNA ligase family. LigA subfamily. The cofactor is Mg(2+). It depends on Mn(2+) as a cofactor.

The enzyme catalyses NAD(+) + (deoxyribonucleotide)n-3'-hydroxyl + 5'-phospho-(deoxyribonucleotide)m = (deoxyribonucleotide)n+m + AMP + beta-nicotinamide D-nucleotide.. DNA ligase that catalyzes the formation of phosphodiester linkages between 5'-phosphoryl and 3'-hydroxyl groups in double-stranded DNA using NAD as a coenzyme and as the energy source for the reaction. It is essential for DNA replication and repair of damaged DNA. In Akkermansia muciniphila (strain ATCC BAA-835 / DSM 22959 / JCM 33894 / BCRC 81048 / CCUG 64013 / CIP 107961 / Muc), this protein is DNA ligase.